We begin with the raw amino-acid sequence, 253 residues long: Large ribosomal subunit protein bL28m (253 aa).

A mitochondrion-targeting transit peptide spans 1-55 (MPLHKYPPALWDVLKLKDGIYARLPEHYRRSLLEKHKPYPVHWKPHGLKYRLNPK).

It belongs to the bacterial ribosomal protein bL28 family. Component of the mitochondrial ribosome large subunit (39S) which comprises a 16S rRNA and about 50 distinct proteins.

It is found in the mitochondrion. This Xenopus laevis (African clawed frog) protein is Large ribosomal subunit protein bL28m (mrpl28).